Reading from the N-terminus, the 180-residue chain is Large ribosomal subunit protein uL5 (180 aa).

It belongs to the universal ribosomal protein uL5 family. Part of the 50S ribosomal subunit; part of the 5S rRNA/L5/L18/L25 subcomplex. Contacts the 5S rRNA and the P site tRNA. Forms a bridge to the 30S subunit in the 70S ribosome.

In terms of biological role, this is one of the proteins that bind and probably mediate the attachment of the 5S RNA into the large ribosomal subunit, where it forms part of the central protuberance. In the 70S ribosome it contacts protein S13 of the 30S subunit (bridge B1b), connecting the 2 subunits; this bridge is implicated in subunit movement. Contacts the P site tRNA; the 5S rRNA and some of its associated proteins might help stabilize positioning of ribosome-bound tRNAs. This Streptococcus pyogenes serotype M1 protein is Large ribosomal subunit protein uL5.